A 276-amino-acid polypeptide reads, in one-letter code: Large ribosomal subunit protein uL2 (276 aa).

Positions 224–276 are disordered; that stretch reads VMNPVDHPHGGGEGKAPIGRKSPMTPWGKPTLGYKTRKKKNKSDKFIIRRRKK. The segment covering 258-276 has biased composition (basic residues); that stretch reads KTRKKKNKSDKFIIRRRKK.

The protein belongs to the universal ribosomal protein uL2 family. In terms of assembly, part of the 50S ribosomal subunit. Forms a bridge to the 30S subunit in the 70S ribosome.

One of the primary rRNA binding proteins. Required for association of the 30S and 50S subunits to form the 70S ribosome, for tRNA binding and peptide bond formation. It has been suggested to have peptidyltransferase activity; this is somewhat controversial. Makes several contacts with the 16S rRNA in the 70S ribosome. The protein is Large ribosomal subunit protein uL2 of Geobacillus stearothermophilus (Bacillus stearothermophilus).